The primary structure comprises 735 residues: MAVPTIPSPACISQSANGSIISTRRSTETNPRQHPSTSYRCAGRVVRRQGRSAISRSGSRYLHDLEAGRSLLKRVTLRRDWDSRLDEKDQYPRLGARAAATFEAKPENAEKDYSKNGKAANKGVDNGKDRLAKVPISNIRNFSIIAHIDHGKSTLADKLLQTTGTVLAREMKEQFLDNMDLERERGITIKLQAARMRYVDETGEAYCLNLIDTPGHVDFSYEVSRSLAACEGALLVVDASQGVEAQTLANVYLALESNLEIIPVLNKIDLPGADPERVRREIEEIIGLDCSEAILCSAKEGVGIPEILNAVVKKIPPPKDTAAEPLRALIFDSYYDSYRGVVVYFRVMDGRVKKGDYVQFMNSKTEYQVDEVGVLSPIQMPVNELYAGEVGYLSASIKSVADARVGDTITTVSRKAAQALPGYQLATPMVFCGLFPIDADQFVELREALEKLQLNDAALQFEPETSSAMGFGFRCGFLGLLHMEIVQERLEREYGLDLITTAPSVVYRVHCTDGTITECSNPSALPDAGKRKSIEEPYVRIELLTPKDYIGPLMELAQERRGEFKEMKFITENRASLVYMLPLGEMVGDFFDQLKSRSKGYASMEYSVKGYRESKLVKLDIRINDEAVDPLAVIVHQDKAYSVGRALTQQLKKLIPRQLFKIPIQACIGSKVIASENIAAMRKDVLAKCYGGDISRKKKLLKKQAEGKKRMKSLGRVDVPQDAFMAILRLEKEVV.

Disordered stretches follow at residues 1-38 (MAVP…PSTS) and 106-126 (PENA…GVDN). The N-terminal 47 residues, 1 to 47 (MAVPTIPSPACISQSANGSIISTRRSTETNPRQHPSTSYRCAGRVVR), are a transit peptide targeting the chloroplast. The span at 11-38 (CISQSANGSIISTRRSTETNPRQHPSTS) shows a compositional bias: polar residues. Positions 106–115 (PENAEKDYSK) are enriched in basic and acidic residues. The 183-residue stretch at 137-319 (SNIRNFSIIA…AVVKKIPPPK (183 aa)) folds into the tr-type G domain. Residues 146-153 (AHIDHGKS), 212-216 (DTPGH), and 266-269 (NKID) contribute to the GTP site.

This sequence belongs to the TRAFAC class translation factor GTPase superfamily. Classic translation factor GTPase family. LepA subfamily.

The protein localises to the plastid. It localises to the chloroplast. The enzyme catalyses GTP + H2O = GDP + phosphate + H(+). In terms of biological role, promotes chloroplast protein synthesis. May act as a fidelity factor of the translation reaction, by catalyzing a one-codon backward translocation of tRNAs on improperly translocated ribosomes. This Physcomitrium patens (Spreading-leaved earth moss) protein is Translation factor GUF1 homolog, chloroplastic.